A 420-amino-acid chain; its full sequence is Histidine--tRNA ligase (420 aa).

It belongs to the class-II aminoacyl-tRNA synthetase family. In terms of assembly, homodimer.

It localises to the cytoplasm. It carries out the reaction tRNA(His) + L-histidine + ATP = L-histidyl-tRNA(His) + AMP + diphosphate + H(+). This Ureaplasma parvum serovar 3 (strain ATCC 27815 / 27 / NCTC 11736) protein is Histidine--tRNA ligase.